The following is a 222-amino-acid chain: Eukaryotic translation initiation factor 3 subunit K (222 aa).

A PCI domain is found at 46-208 (YDLEANLAVL…KIKTKNITEK (163 aa)).

This sequence belongs to the eIF-3 subunit K family. In terms of assembly, component of the eukaryotic translation initiation factor 3 (eIF-3) complex. The eIF-3 complex interacts with pix.

The protein localises to the cytoplasm. Component of the eukaryotic translation initiation factor 3 (eIF-3) complex, which is involved in protein synthesis of a specialized repertoire of mRNAs and, together with other initiation factors, stimulates binding of mRNA and methionyl-tRNAi to the 40S ribosome. The eIF-3 complex specifically targets and initiates translation of a subset of mRNAs involved in cell proliferation. The chain is Eukaryotic translation initiation factor 3 subunit K from Drosophila erecta (Fruit fly).